Reading from the N-terminus, the 314-residue chain is Malate dehydrogenase (314 aa).

Residues 12–17 (GAGFTG) and Asp-36 each bind NAD(+). The substrate site is built by Arg-87 and Arg-93. NAD(+)-binding positions include Asn-100 and 123 to 125 (LTN). Asn-125 contributes to the substrate binding site. Residue Ser-149 is modified to Phosphoserine. Arg-156 is a binding site for substrate. Catalysis depends on His-180, which acts as the Proton acceptor.

The protein belongs to the LDH/MDH superfamily. MDH type 3 family.

The catalysed reaction is (S)-malate + NAD(+) = oxaloacetate + NADH + H(+). Functionally, catalyzes the reversible oxidation of malate to oxaloacetate. The sequence is that of Malate dehydrogenase from Halalkalibacterium halodurans (strain ATCC BAA-125 / DSM 18197 / FERM 7344 / JCM 9153 / C-125) (Bacillus halodurans).